Here is a 522-residue protein sequence, read N- to C-terminus: Putative glucosylceramidase 3 (522 aa).

An N-terminal signal peptide occupies residues 1-21; the sequence is MSRWKVVILCLLSFMFEIGHA. Catalysis depends on Glu259, which acts as the Proton donor. The active-site Nucleophile is the Glu364.

Belongs to the glycosyl hydrolase 30 family.

It catalyses the reaction a beta-D-glucosylceramide + H2O = an N-acyl-sphingoid base + D-glucose. The enzyme catalyses a beta-D-glucosyl-(1&lt;-&gt;1')-N-acylsphing-4-enine + H2O = an N-acylsphing-4-enine + D-glucose. It carries out the reaction an N-acyl-1-beta-D-glucosyl-15-methylhexadecasphing-4-enine + H2O = an N-acyl-15-methylhexadecasphing-4-enine + D-glucose. The protein operates within lipid metabolism; sphingolipid metabolism. Glucosylceramidase that catalyzes the hydrolysis of glucosylceramides into free ceramides and glucose. C.elegans contain specific sphingoid bases, which are unique or different in structure compared to the sphingoid bases found in other animals. Two examples of these distinctive compounds are: 15-methylhexadecasphinganine and 15-methylhexadecasphing-4-enine. This chain is Putative glucosylceramidase 3, found in Caenorhabditis elegans.